A 276-amino-acid chain; its full sequence is MEPLWHKLSALPFFSSRPEKWEGSGAPPSLTAFIRSLFKGKALSLELYATALTHRSMVHDTTAPEITRSNQRLEFLGDSVLGLIISEYLYRRFPEGTEGELSSYRAKIVNGKSLAGFARNLDLGIHLIIGESADQQRIRTSTSTLADAFEALTGAIYLDRGLDAVREFIEEQIIDSPAFEAMVSTENNHKSRLIEHTQSHQLPPPVYTVLSEEGAEHEKTFTIEVSCNGRRLGRGTALRKKDAEQLAAEEAMGALERALTGDVAEDTPAPEETGRG.

Residues 30-161 enclose the RNase III domain; that stretch reads LTAFIRSLFK…LTGAIYLDRG (132 aa). A Mg(2+)-binding site is contributed by Glu-74. Asp-78 is an active-site residue. Mg(2+) is bound by residues Asp-147 and Glu-150. Glu-150 is a catalytic residue. A DRBM domain is found at 188–257; the sequence is NHKSRLIEHT…AEEAMGALER (70 aa).

Belongs to the ribonuclease III family. Homodimer. Requires Mg(2+) as cofactor.

The protein resides in the cytoplasm. The catalysed reaction is Endonucleolytic cleavage to 5'-phosphomonoester.. Digests double-stranded RNA. Involved in the processing of primary rRNA transcript to yield the immediate precursors to the large and small rRNAs (23S and 16S). Processes some mRNAs, and tRNAs when they are encoded in the rRNA operon. Processes pre-crRNA and tracrRNA of type II CRISPR loci if present in the organism. The protein is Ribonuclease 3 of Chlorobium luteolum (strain DSM 273 / BCRC 81028 / 2530) (Pelodictyon luteolum).